We begin with the raw amino-acid sequence, 176 residues long: NAD(P)H-quinone oxidoreductase subunit J (176 aa).

Belongs to the complex I 30 kDa subunit family. As to quaternary structure, NDH-1 can be composed of about 15 different subunits; different subcomplexes with different compositions have been identified which probably have different functions.

The protein localises to the cellular thylakoid membrane. It carries out the reaction a plastoquinone + NADH + (n+1) H(+)(in) = a plastoquinol + NAD(+) + n H(+)(out). The enzyme catalyses a plastoquinone + NADPH + (n+1) H(+)(in) = a plastoquinol + NADP(+) + n H(+)(out). Functionally, NDH-1 shuttles electrons from an unknown electron donor, via FMN and iron-sulfur (Fe-S) centers, to quinones in the respiratory and/or the photosynthetic chain. The immediate electron acceptor for the enzyme in this species is believed to be plastoquinone. Couples the redox reaction to proton translocation, and thus conserves the redox energy in a proton gradient. Cyanobacterial NDH-1 also plays a role in inorganic carbon-concentration. In Nostoc punctiforme (strain ATCC 29133 / PCC 73102), this protein is NAD(P)H-quinone oxidoreductase subunit J.